A 1258-amino-acid polypeptide reads, in one-letter code: Ice nucleation protein (1258 aa).

Residues 162–1217 (ATYGSTLSGT…LTAGENSVLI (1056 aa)) form an octapeptide periodicity region. 5 disordered regions span residues 260 to 287 (YGST…KGSD), 311 to 342 (TQTA…GYGS), 356 to 383 (YGST…KGSD), 407 to 438 (TQTA…GYGS), and 452 to 480 (YGST…GSDL). Polar residues-rich tracts occupy residues 261–286 (GSTQ…QKGS), 311–334 (TQTA…QKGS), 357–382 (GSTQ…QKGS), 407–430 (TQTA…QKGS), and 453–480 (GSTQ…GSDL).

It belongs to the bacterial ice nucleation protein family.

Its subcellular location is the cell outer membrane. Ice nucleation proteins enable bacteria to nucleate crystallization in supercooled water. This chain is Ice nucleation protein (iceE), found in Enterobacter agglomerans (Erwinia herbicola).